The following is a 429-amino-acid chain: MKLQKPKGTQDILPAESAKWQYVEGFAREIFKRYNYAEVRTPIFEHYEVISRSVGDTTDIVTKEMYDFYDKGDRHITLRPEGTAPVVRSYVENKLFAPEVQKPSKFYYMGPMFRYERPQAGRLRQFHQIGVECFGSSNPATDVETIAMAAHFLKEIGIQGVKLHLNTLGNPESRAAYRQALIDYLTPLKETLSKDSQRRLEENPLRVLDSKEKEDKVAVENAPSILDFLDEESQAHFDAVRQMLENLGVDYIIDTNMVRGLDYYNHTIFEFITEIEGNDLTVCAGGRYDGLVAYFGGPETAGFGFGLGVERLLLILEKQGVTLPIENALDVYIAVLGEGANIKALELVQALRQQGFKAERDYLNRKLKAQFKSADVFAAKTLITLGESEVESGQVTVKNNQTREEVQVSLETISQNFSEIFEKLGFYTQ.

Belongs to the class-II aminoacyl-tRNA synthetase family. As to quaternary structure, homodimer.

The protein resides in the cytoplasm. The catalysed reaction is tRNA(His) + L-histidine + ATP = L-histidyl-tRNA(His) + AMP + diphosphate + H(+). This Streptococcus pneumoniae serotype 4 (strain ATCC BAA-334 / TIGR4) protein is Histidine--tRNA ligase.